A 180-amino-acid chain; its full sequence is Protein SPMIP9 (180 aa).

As to quaternary structure, microtubule inner protein component of sperm flagellar doublet microtubules.

It localises to the nucleus. The protein localises to the cytoplasm. Its subcellular location is the cytoskeleton. It is found in the flagellum axoneme. Its function is as follows. Microtubule inner protein (MIP) part of the dynein-decorated doublet microtubules (DMTs) in flagella axoneme. The protein is Protein SPMIP9 (SPMIP9) of Bos taurus (Bovine).